A 98-amino-acid polypeptide reads, in one-letter code: Small ribosomal subunit protein bS6 (98 aa).

It belongs to the bacterial ribosomal protein bS6 family.

Binds together with bS18 to 16S ribosomal RNA. This chain is Small ribosomal subunit protein bS6, found in Staphylococcus epidermidis (strain ATCC 35984 / DSM 28319 / BCRC 17069 / CCUG 31568 / BM 3577 / RP62A).